We begin with the raw amino-acid sequence, 918 residues long: Chaperone protein ClpC1, chloroplastic (918 aa).

One can recognise a Clp R domain in the interval 88–230 (FERFTEKAIK…RTQVIRMVGE (143 aa)). 2 repeat regions span residues 91-156 (FTEK…IGRG) and 166-230 (FTPR…MVGE). Residues 251–498 (LEEYGTNLTK…RVRLRHAQLP (248 aa)) form an i region. 296–303 (GEPGVGKT) contacts ATP. In terms of domain architecture, UVR spans 505–540 (DKELRQVTKDKNEAVRGQDFEKAGELRDREMELKAQ). Residues 565 to 756 (VTEADIQHIV…LLIMTSNVGS (192 aa)) form an II region. ATP is bound at residue 639–646 (GPTGVGKS).

Belongs to the ClpA/ClpB family. ClpC subfamily. Widely expressed.

It is found in the plastid. Its subcellular location is the chloroplast. Molecular chaperone that may interact with a ClpP-like protease involved in degradation of denatured proteins in the chloroplast. The protein is Chaperone protein ClpC1, chloroplastic (CLPC1) of Oryza sativa subsp. japonica (Rice).